The chain runs to 546 residues: Probable protein kinase UbiB (546 aa).

The Protein kinase domain occupies 124-502; the sequence is DFDIQPLASA…HVRQSQSRYL (379 aa). Residues 130 to 138 and Lys-153 contribute to the ATP site; that span reads LASASIAQV. Asp-288 acts as the Proton acceptor in catalysis. Transmembrane regions (helical) follow at residues 501-521 and 522-542; these read YLLG…VNRP and EWGL…LVGW.

The protein belongs to the ABC1 family. UbiB subfamily.

The protein resides in the cell inner membrane. The protein operates within cofactor biosynthesis; ubiquinone biosynthesis [regulation]. Its function is as follows. Is probably a protein kinase regulator of UbiI activity which is involved in aerobic coenzyme Q (ubiquinone) biosynthesis. The sequence is that of Probable protein kinase UbiB from Salmonella gallinarum (strain 287/91 / NCTC 13346).